We begin with the raw amino-acid sequence, 395 residues long: Glyceraldehyde-3-phosphate dehydrogenase, testis-specific (395 aa).

Positions 1–60 (MSKRDIVLTNVTVVQLLRQPCPEPRVEAEPEPPAQPQPQPEPIKEEVPPPPPPPPAPKKV) are testis-specific N-terminal extension. Residues 19-59 (QPCPEPRVEAEPEPPAQPQPQPEPIKEEVPPPPPPPPAPKK) form a disordered region. Composition is skewed to pro residues over residues 31 to 41 (EPPAQPQPQPE) and 48 to 57 (PPPPPPPPAP). NAD(+)-binding positions include 72-73 (RI), D93, and K138. Residues 210–212 (SCT), T241, 270–271 (TG), and R293 each bind D-glyceraldehyde 3-phosphate. C211 (nucleophile) is an active-site residue. N375 lines the NAD(+) pocket.

This sequence belongs to the glyceraldehyde-3-phosphate dehydrogenase family. In terms of assembly, homotetramer.

The protein localises to the cytoplasm. It catalyses the reaction D-glyceraldehyde 3-phosphate + phosphate + NAD(+) = (2R)-3-phospho-glyceroyl phosphate + NADH + H(+). The protein operates within carbohydrate degradation; glycolysis; pyruvate from D-glyceraldehyde 3-phosphate: step 1/5. In terms of biological role, may play an important role in regulating the switch between different pathways for energy production during spermiogenesis and in the spermatozoon. Required for sperm motility and male fertility. This is Glyceraldehyde-3-phosphate dehydrogenase, testis-specific (GAPDHS) from Bos taurus (Bovine).